The sequence spans 763 residues: Phosphoglycerol transferase I (763 aa).

Transmembrane regions (helical) follow at residues 1 to 21 (MSEL…AWKA), 26 to 46 (WWFA…ITLF), 77 to 97 (ILPG…LGWI), and 108 to 128 (FGYS…SPAF).

This sequence belongs to the OpgB family.

The protein resides in the cell inner membrane. It carries out the reaction a phosphatidylglycerol + a membrane-derived-oligosaccharide D-glucose = a 1,2-diacyl-sn-glycerol + a membrane-derived-oligosaccharide 6-(glycerophospho)-D-glucose.. It functions in the pathway glycan metabolism; osmoregulated periplasmic glucan (OPG) biosynthesis. In terms of biological role, transfers a phosphoglycerol residue from phosphatidylglycerol to the membrane-bound nascent glucan backbones. This is Phosphoglycerol transferase I from Shigella boydii serotype 18 (strain CDC 3083-94 / BS512).